A 235-amino-acid polypeptide reads, in one-letter code: 2-C-methyl-D-erythritol 4-phosphate cytidylyltransferase (235 aa).

This sequence belongs to the IspD/TarI cytidylyltransferase family. IspD subfamily.

It catalyses the reaction 2-C-methyl-D-erythritol 4-phosphate + CTP + H(+) = 4-CDP-2-C-methyl-D-erythritol + diphosphate. It functions in the pathway isoprenoid biosynthesis; isopentenyl diphosphate biosynthesis via DXP pathway; isopentenyl diphosphate from 1-deoxy-D-xylulose 5-phosphate: step 2/6. In terms of biological role, catalyzes the formation of 4-diphosphocytidyl-2-C-methyl-D-erythritol from CTP and 2-C-methyl-D-erythritol 4-phosphate (MEP). This is 2-C-methyl-D-erythritol 4-phosphate cytidylyltransferase from Leptospira borgpetersenii serovar Hardjo-bovis (strain L550).